A 543-amino-acid polypeptide reads, in one-letter code: Reticulophagy regulator 2 (543 aa).

Transmembrane regions (helical) follow at residues 12–32 (AGGG…SLGM), 100–120 (SLRP…LDLW), and 204–224 (VPGI…PLVV). Positions 254 to 265 (LHHKHDKRKRQG) are enriched in basic residues. Residues 254–287 (LHHKHDKRKRQGKNAPPGGDEPLAETESESEAEL) are disordered. Over residues 275 to 285 (PLAETESESEA) the composition is skewed to acidic residues. Position 279 is a phosphothreonine (Thr279). A phosphoserine mark is found at Ser281, Ser283, Ser291, and Ser311. Position 334 is a phosphothreonine (Thr334). Disordered regions lie at residues 336 to 394 (VSED…DVAA) and 411 to 486 (HFNG…EEEA). Ser337, Ser344, Ser347, and Ser385 each carry phosphoserine. The segment covering 461 to 480 (APSPSILPPVPQDSPQPLPA) has biased composition (pro residues). An LIR motif motif is present at residues 490–495 (EDFELL). The segment at 504-543 (NAELGLEPETPPKPPDAPPLGPDIHSLVQSDQEAQAVAEP) is disordered. Pro residues predominate over residues 512–524 (ETPPKPPDAPPLG).

It belongs to the RETREG family. As to quaternary structure, interacts with ATG8 family modifier proteins MAP1LC3A, MAP1LC3B, MAP1LC3C, GABARAP, GABARAPL1 and GABARAPL2. Shows higher affinity for GABARAPL1 than for MAP1LC3B. Interacts with CANX.

The protein localises to the endoplasmic reticulum membrane. In terms of biological role, endoplasmic reticulum (ER)-anchored autophagy regulator which exists in an inactive state under basal conditions but is activated following cellular stress. When activated, induces ER fragmentation and mediates ER delivery into lysosomes through sequestration into autophagosomes via interaction with ATG8 family proteins. Required for collagen quality control in a LIR motif-independent manner. This Homo sapiens (Human) protein is Reticulophagy regulator 2.